A 96-amino-acid chain; its full sequence is Molybdopterin synthase sulfur carrier subunit (96 aa).

Residue Gly-96 is modified to 1-thioglycine; alternate. Glycyl adenylate; alternate is present on Gly-96.

Belongs to the MoaD family. MOCS2A subfamily. In terms of assembly, heterotetramer; composed of 2 small (MOCS2A) and 2 large (MOCS2B) subunits. In terms of processing, C-terminal thiocarboxylation occurs in 2 steps, it is first acyl-adenylated (-COAMP) via the hesA/moeB/thiF part of UBA4, then thiocarboxylated (-COSH) via the rhodanese domain of UBA4.

It is found in the cytoplasm. It functions in the pathway cofactor biosynthesis; molybdopterin biosynthesis. In terms of biological role, acts as a sulfur carrier required for molybdopterin biosynthesis. Component of the molybdopterin synthase complex that catalyzes the conversion of precursor Z into molybdopterin by mediating the incorporation of 2 sulfur atoms into precursor Z to generate a dithiolene group. In the complex, serves as sulfur donor by being thiocarboxylated (-COSH) at its C-terminus by UBA4. After interaction with MOCS2B, the sulfur is then transferred to precursor Z to form molybdopterin. In Phaeosphaeria nodorum (strain SN15 / ATCC MYA-4574 / FGSC 10173) (Glume blotch fungus), this protein is Molybdopterin synthase sulfur carrier subunit.